A 471-amino-acid chain; its full sequence is Ubiquitin-conjugating enzyme E2 variant 3 (471 aa).

The UEV domain occupies 2–145 (DVNSEPVKKV…EEEPPLGTKS (144 aa)). 183–211 (GDLGIAAVLSIMAKSCVDKLVLIDIPENS) is a binding site for NAD(+).

In the N-terminal section; belongs to the ubiquitin-conjugating enzyme family. UEV subfamily. It in the C-terminal section; belongs to the LDH/MDH superfamily. Homodimer.

Functionally, possible negative regulator of polyubiquitination. In Danio rerio (Zebrafish), this protein is Ubiquitin-conjugating enzyme E2 variant 3 (uevld).